A 415-amino-acid polypeptide reads, in one-letter code: Serine hydroxymethyltransferase (415 aa).

(6S)-5,6,7,8-tetrahydrofolate contacts are provided by residues leucine 121 and 125 to 127 (GHL). The residue at position 229 (lysine 229) is an N6-(pyridoxal phosphate)lysine. 352–354 (TPF) contacts (6S)-5,6,7,8-tetrahydrofolate.

This sequence belongs to the SHMT family. In terms of assembly, homodimer. Pyridoxal 5'-phosphate is required as a cofactor.

It localises to the cytoplasm. The enzyme catalyses (6R)-5,10-methylene-5,6,7,8-tetrahydrofolate + glycine + H2O = (6S)-5,6,7,8-tetrahydrofolate + L-serine. Its pathway is one-carbon metabolism; tetrahydrofolate interconversion. It participates in amino-acid biosynthesis; glycine biosynthesis; glycine from L-serine: step 1/1. Functionally, catalyzes the reversible interconversion of serine and glycine with tetrahydrofolate (THF) serving as the one-carbon carrier. This reaction serves as the major source of one-carbon groups required for the biosynthesis of purines, thymidylate, methionine, and other important biomolecules. Also exhibits THF-independent aldolase activity toward beta-hydroxyamino acids, producing glycine and aldehydes, via a retro-aldol mechanism. This Chromobacterium violaceum (strain ATCC 12472 / DSM 30191 / JCM 1249 / CCUG 213 / NBRC 12614 / NCIMB 9131 / NCTC 9757 / MK) protein is Serine hydroxymethyltransferase.